The following is a 70-amino-acid chain: Small ribosomal subunit protein bS21 (70 aa).

The protein belongs to the bacterial ribosomal protein bS21 family.

In Helicobacter acinonychis (strain Sheeba), this protein is Small ribosomal subunit protein bS21.